A 1237-amino-acid polypeptide reads, in one-letter code: Zinc finger protein ZFAT (1237 aa).

The C2H2-type 1 zinc-finger motif lies at 12–35 (FMCKCCNLFSPNQSELVTHVSEKH). The segment at 50–110 (RPLNTPENPN…GPLATEEGSR (61 aa)) is disordered. A compositionally biased stretch (basic residues) spans 70–81 (MKRKRGRPKGST). The segment at 116 to 141 (LECSKCCRKFSNTRQLRKHICIIVLN) adopts a C2H2-type 2; degenerate zinc-finger fold. A disordered region spans residues 147–188 (GDAGNESDLDLEKTYKEDDREKASKRPRAQKTEKVQKISGKE). Positions 156–186 (DLEKTYKEDDREKASKRPRAQKTEKVQKISG) are enriched in basic and acidic residues. 7 C2H2-type zinc fingers span residues 271 to 293 (FTCE…LRIH), 299 to 321 (YKCS…LRKH), 326 to 349 (FACD…ERVH), 354 to 377 (QHCR…RDMH), 404 to 426 (YDCH…MLVH), 432 to 454 (FACE…VRKH), and 458 to 481 (YVCA…REVH). 20 residues coordinate Zn(2+): Cys273, Cys276, His289, His293, Cys301, Cys304, His317, His321, Cys328, Cys331, His344, His349, Cys356, Cys359, His372, His377, Cys406, Cys409, His422, and His426. Zn(2+)-binding residues include Cys460, Cys463, His476, and His481. Disordered stretches follow at residues 551-576 (VPGD…LSPC) and 601-671 (SDTS…CLRA). Positions 565 to 574 (TPQSESSSLS) are enriched in polar residues. Residues 601 to 617 (SDTSSAEPPAAAEATSD) show a composition bias toward low complexity. 4 consecutive C2H2-type zinc fingers follow at residues 737-759 (LECE…VRTH), 765-788 (YYCS…IQKH), 793-817 (LKCP…LKVH), and 825-848 (YSCP…KTNH). Residues Cys767, Cys770, His783, His788, Cys795, Cys800, His813, His817, Cys827, Cys830, His843, His848, Cys877, Cys880, His894, His898, Cys906, Cys909, His922, His926, Cys934, Cys937, His950, and Leu953 each coordinate Zn(2+). The segment at 875–898 (MKCPYCDFYFMKNGSDLQRHIWAH) adopts a C2H2-type 14; degenerate zinc-finger fold. C2H2-type zinc fingers lie at residues 904–926 (FKCS…MNRH), 932–954 (HLCD…KLLH), 961–983 (FKCT…MEQH), 989–1012 (FRCA…NRKH), and 1036–1059 (LKCP…KNKH).

In terms of tissue distribution, detected in spleen and thymus but not in liver, muscle, heart, kidney, brain, bone marrow or pancreas. Expressed in CD19+, CD4+ and CD8+ lymphocytes but not in CD11b+ lymphocytes or peritoneal macrophages (at protein level).

The protein localises to the nucleus. It localises to the cytoplasm. It is found in the cytosol. Its function is as follows. May be involved in transcriptional regulation. Overexpression causes down-regulation of a number of genes involved in the immune response. Some genes are also up-regulated. The sequence is that of Zinc finger protein ZFAT (Zfat) from Mus musculus (Mouse).